An 899-amino-acid chain; its full sequence is Proline-rich transmembrane protein 4 (899 aa).

Residues 1–23 (MARHGCLGLGLFCCVLFAATVGP) form the signal peptide. 2 disordered regions span residues 110–152 (LTEW…RRST) and 295–340 (TVPI…PEAP). The next 5 membrane-spanning stretches (helical) occupy residues 370-390 (VGALFGLVALLALLALALLPW), 392-412 (CPPGAPCLALLDLLLLSAGTT), 430-450 (ALAWLLLQDLPLPCLAAGLGL), 467-487 (LAALLLLGLGLAAAAALGSAA), and 500-520 (GLHAFLAAFLSGLLLALSCWG). Phosphoserine is present on S641. 2 disordered regions span residues 769 to 797 (TGGRASERSGEASGPAAPPELPSPGAWPA) and 839 to 869 (PSGSSPSLPASGSYQALSPPSRDSPEPASEL). Residues 840–851 (SGSSPSLPASGS) are compositionally biased toward low complexity.

It is found in the membrane. This chain is Proline-rich transmembrane protein 4 (PRRT4), found in Homo sapiens (Human).